A 421-amino-acid chain; its full sequence is MDISPRTRPDLPLPSAAIAEPTRHEPDAGGHFGVYGGRYVAEALMAVIEEVTTAYEKERVNQDFLDTLDYLQANYAGRPSPLYEAPRLSEQAGARIFLKREDLNHTGSHKINNVLGQALLAQRMGKKRVIAETGAGQHGVATATACALLGLECVIYMGAVDTERQALNVARMRLLGATVVSVQSGSKTLKDAINEAFRDWVTNADNTFYCFGTAAGPHPFPAMVRDFQRIIGLEARAQIQAQAGRLPDAVLACIGGGSNAIGIFHPFIDDPGVRLIGFEAAGDGVETGRHAATFSGGSPGAFQGSFSYLLQDEDGQTIESHSISAGLDYPGVGPEHAWLRERVSTTRGWVRNTRGCARFRTLCRTEGIIPAIESAHAVAGALKVAPELGKAAIIVVNLSGRGDKDVETAAQWFGLLGSSDR.

Residue Lys110 is modified to N6-(pyridoxal phosphate)lysine.

It belongs to the TrpB family. As to quaternary structure, tetramer of two alpha and two beta chains. The cofactor is pyridoxal 5'-phosphate.

It catalyses the reaction (1S,2R)-1-C-(indol-3-yl)glycerol 3-phosphate + L-serine = D-glyceraldehyde 3-phosphate + L-tryptophan + H2O. Its pathway is amino-acid biosynthesis; L-tryptophan biosynthesis; L-tryptophan from chorismate: step 5/5. The beta subunit is responsible for the synthesis of L-tryptophan from indole and L-serine. This is Tryptophan synthase beta chain (trpB) from Mycobacterium intracellulare.